A 361-amino-acid polypeptide reads, in one-letter code: Oxidoreductase lepF (361 aa).

The helical transmembrane segment at 257–277 (MLMLVLQAVLLPVFYVVAMPL) threads the bilayer.

Belongs to the NmrA-type oxidoreductase family.

Its subcellular location is the membrane. Oxidoreductase; part of the gene cluster 23 that mediates the biosynthesis of a family of 2-pyridones known as leporins. The hybrid PKS-NRPS synthetase lepA and the enoyl reductase lepG are responsible for fusion of phenylalanine with a hexaketide and subsequent release of the stable tetramic acid precursor, pre-leporin C. Because lepA lacks a designated enoylreductase (ER) domain, the required activity is provided the enoyl reductase lepG. It is possible that the dehydrogenase lepF also participates in production of pre-leporin C. Cytochrome P450 monooxygenase lepH is then required for the ring expansion step to yield leporin C. Leporin C is then presumably further oxidized by the N-hydroxylase lepD to form leporin B. LepI may possess a function in biosynthesis upstream of lepA. Leporin B is further oxidized in the presence of ferric ion to give the leporin B trimer-iron chelate, but whether or not this reaction is catalyzed by an enzyme in the pathway or by ferric ion is not determined yet. This Aspergillus flavus (strain ATCC 200026 / FGSC A1120 / IAM 13836 / NRRL 3357 / JCM 12722 / SRRC 167) protein is Oxidoreductase lepF.